A 351-amino-acid chain; its full sequence is Biotin synthase (351 aa).

Residues 48–265 (NKVRIHILDN…LCMFRLINPD (218 aa)) enclose the Radical SAM core domain. The [4Fe-4S] cluster site is built by C63, C67, and C70. Residues C107, C139, C199, and R269 each contribute to the [2Fe-2S] cluster site.

This sequence belongs to the radical SAM superfamily. Biotin synthase family. As to quaternary structure, homodimer. It depends on [4Fe-4S] cluster as a cofactor. The cofactor is [2Fe-2S] cluster.

It carries out the reaction (4R,5S)-dethiobiotin + (sulfur carrier)-SH + 2 reduced [2Fe-2S]-[ferredoxin] + 2 S-adenosyl-L-methionine = (sulfur carrier)-H + biotin + 2 5'-deoxyadenosine + 2 L-methionine + 2 oxidized [2Fe-2S]-[ferredoxin]. Its pathway is cofactor biosynthesis; biotin biosynthesis; biotin from 7,8-diaminononanoate: step 2/2. In terms of biological role, catalyzes the conversion of dethiobiotin (DTB) to biotin by the insertion of a sulfur atom into dethiobiotin via a radical-based mechanism. The sequence is that of Biotin synthase from Leptospira interrogans serogroup Icterohaemorrhagiae serovar Lai (strain 56601).